Reading from the N-terminus, the 2603-residue chain is Ankyrin repeat domain-containing protein 17 (2603 aa).

Met-1 carries the N-acetylmethionine modification. Low complexity-rich tracts occupy residues 1–34 (MEKA…AAAE) and 42–53 (SSRARSASSPRG). The disordered stretch occupies residues 1–143 (MEKATVPVAA…SFILDQDDLE (143 aa)). Residues Ser-19 and Ser-50 each carry the phosphoserine modification. Over residues 63 to 79 (KKKPPQQQHHKAKRNRT) the composition is skewed to basic residues. Over residues 84–94 (SSSESSSDSDN) the composition is skewed to low complexity. The segment covering 95–111 (SGGGGGGGGGGGGGGGT) has biased composition (gly residues). A compositionally biased stretch (acidic residues) spans 116-131 (SEEEEDDDDEEEEVSE). A Phosphoserine modification is found at Ser-156. ANK repeat units follow at residues 233 to 262 (SDNR…SVNE), 266 to 295 (EGES…NVED), 300 to 329 (GDIT…DVNA), 333 to 362 (TGNT…SIED), 366 to 395 (NGHT…GINT), 400 to 429 (FKES…DQEH), 433 to 462 (EMHT…QVNM), 466 to 495 (SFES…SLEE), 499 to 528 (EGYT…NINA), 533 to 562 (TQET…DIEL), 563 to 592 (GCST…NVHA), 596 to 625 (TGDT…DLEH), 629 to 658 (GGRT…NVNR), 663 to 692 (NDHT…DPTH), and 696 to 725 (DGST…NLLS). Lys-318 is covalently cross-linked (Glycyl lysine isopeptide (Lys-Gly) (interchain with G-Cter in SUMO2)). Ser-803 is subject to Phosphoserine. ANK repeat units follow at residues 1082 to 1111 (NHDT…SIEH), 1115 to 1144 (KGFT…DIEA), 1149 to 1178 (TKDT…NKEH), 1182 to 1211 (SDYT…EINS), 1217 to 1246 (LGIS…DINA), 1251 to 1280 (NRNT…NVEH), 1284 to 1313 (TGLT…DVNA), 1319 to 1348 (SRDT…HIDV), 1352 to 1381 (KGNT…DVDA), and 1385 to 1414 (RKIT…QFPS). Positions 1442–1526 (VQAKDRQAAE…EKEKLKVEDE (85 aa)) form a coiled coil. Ser-1457 is subject to Phosphoserine. 2 disordered regions span residues 1479–1500 (AKRE…RKLE) and 1517–1717 (EKEK…QKRE). The span at 1481–1491 (REKRKEKRRKK) shows a compositional bias: basic residues. Low complexity-rich tracts occupy residues 1531–1550 (TEPP…TWTT), 1602–1611 (ESKSSSTSES), and 1620–1632 (SSCS…SNSS). Phosphoserine is present on residues Ser-1635 and Ser-1639. Polar residues-rich tracts occupy residues 1642–1652 (VVTTTVSSKKQ) and 1675–1703 (LSET…SPNG). Ser-1696, Ser-1700, and Ser-1709 each carry phosphoserine. The KH domain occupies 1725–1789 (RRSKKVSVPS…ESTRQATQLI (65 aa)). An Asymmetric dimethylarginine modification is found at Arg-1874. Disordered regions lie at residues 1906-1995 (PRLP…PSVR), 2011-2192 (TTVT…HKNS), and 2273-2332 (VVSS…YGSV). Low complexity-rich tracts occupy residues 1950 to 1995 (SNQN…PSVR) and 2011 to 2028 (TTVT…TNAT). Residues Ser-2042, Ser-2044, Ser-2045, Ser-2047, Ser-2059, and Ser-2067 each carry the phosphoserine modification. A compositionally biased stretch (polar residues) spans 2066-2078 (ASPNKVASSSEQE). Residues 2095 to 2106 (SSSSSGSSSAHS) show a composition bias toward low complexity. Polar residues-rich tracts occupy residues 2107 to 2127 (NQQQ…QQSQ) and 2273 to 2303 (VVSS…SDTS). A compositionally biased stretch (pro residues) spans 2308–2318 (FRPPLQRPAPS). 2 positions are modified to phosphoserine: Ser-2373 and Ser-2401. A disordered region spans residues 2381–2423 (CSSASNDSSAQSVSSGVRAPSPAPSSVPLGSEKPSNVSQDRKV). Residues 2382–2411 (SSASNDSSAQSVSSGVRAPSPAPSSVPLGS) show a composition bias toward low complexity.

In terms of assembly, interacts (via N-terminus) with NOD2. Interacts with CDK2, MCM3, MCM5, MCM7, CDC6 and PCNA. Interacts with MAVS and IFIH1. Interacts (via the second ankyrin repeat cluster) with DDX58. As to quaternary structure, (Microbial infection) Interacts with enterovirus 71/EV71 capsid protein VP1. Phosphorylated by CDK2. As to expression, ubiquitously expressed.

Its subcellular location is the cytoplasm. It localises to the nucleus. In terms of biological role, could play pivotal roles in cell cycle and DNA regulation. Involved in innate immune defense against viruse by positively regulating the viral dsRNA receptors DDX58 and IFIH1 signaling pathways. Involves in NOD2- and NOD1-mediated responses to bacteria suggesting a role in innate antibacterial immune pathways too. Target of enterovirus 71 which is the major etiological agent of HFMD (hand, foot and mouth disease). Could play a central role for the formation and/or maintenance of the blood vessels of the circulation system. This Homo sapiens (Human) protein is Ankyrin repeat domain-containing protein 17 (ANKRD17).